The chain runs to 214 residues: Thymidylate kinase (214 aa).

12 to 19 (GLDGSGKS) is a binding site for ATP.

The protein belongs to the thymidylate kinase family.

It carries out the reaction dTMP + ATP = dTDP + ADP. In terms of biological role, phosphorylation of dTMP to form dTDP in both de novo and salvage pathways of dTTP synthesis. The protein is Thymidylate kinase of Bdellovibrio bacteriovorus (strain ATCC 15356 / DSM 50701 / NCIMB 9529 / HD100).